The chain runs to 64 residues: Large ribosomal subunit protein bL32 (64 aa).

The segment at 1–35 (MAVQKSRVTPSRRGQRRSHDALTAKQLSTDPTSGE) is disordered.

Belongs to the bacterial ribosomal protein bL32 family.

This chain is Large ribosomal subunit protein bL32, found in Xanthomonas campestris pv. campestris (strain 8004).